A 298-amino-acid chain; its full sequence is Short-chain dehydrogenase/reductase prx6 (298 aa).

7 residues coordinate NADP(+): I27, D70, N97, Y174, K178, V208, and T210. Y174 functions as the Proton acceptor in the catalytic mechanism. K178 (lowers pKa of active site Tyr) is an active-site residue.

This sequence belongs to the short-chain dehydrogenases/reductases (SDR) family.

The protein operates within sesquiterpene biosynthesis. Short-chain dehydrogenase/reductase; part of the gene cluster that mediates the biosynthesis of PR-toxin, a bicyclic sesquiterpene belonging to the eremophilane class and acting as a mycotoxin. The first step of the pathway is catalyzed by the aristolochene synthase which performs the cyclization of trans,trans-farnesyl diphosphate (FPP) to the bicyclic sesquiterpene aristolochene. Following the formation of aristolochene, the non-oxygenated aristolochene is converted to the trioxygenated intermediate eremofortin B, via 7-epi-neopetasone. This conversion appears to involve three enzymes, a hydroxysterol oxidase-like enzyme, the quinone-oxidase prx3 that forms the quinone-type-structure in the bicyclic nucleus of aristolochene with the C8-oxo group and the C-3 hydroxyl group, and the P450 monooxygenase prx9 that introduces the epoxide at the double bond between carbons 1 and 2. No monoxy or dioxy-intermediates have been reported to be released to the broth, so these three early oxidative reactions may be coupled together. Eremofortin B is further oxidized by another P450 monooxygenase, that introduces a second epoxide between carbons 7 and 11 prior to acetylation to eremofortin A by the acetyltransferase prx11. The second epoxidation may be performed by a second P450 monooxygenase. After the acetylation step, eremofortin A is converted to eremofortin C and then to PR-toxin. First the conversion of eremofortin A to eremofortin C proceeds by oxidation of the side chain of the molecule at C-12 and is catalyzed by the short-chain oxidoreductase prx1. The cytochrome P450 monooxygenase prx8 also plays a role in this step. The primary alcohol formed at C-12 is finally oxidized by the short-chain alcohol dehydrogenase prx4 that forms PR-toxin. The chain is Short-chain dehydrogenase/reductase prx6 from Penicillium rubens (strain ATCC 28089 / DSM 1075 / NRRL 1951 / Wisconsin 54-1255) (Penicillium chrysogenum).